The sequence spans 56 residues: Ferredoxin (56 aa).

2 consecutive 4Fe-4S ferredoxin-type domains span residues 2–28 and 29–56; these read AYKI…SQGD and SIFV…PVQE. Residues Cys9, Cys12, Cys15, Cys19, Cys38, Cys41, Cys44, and Cys48 each coordinate [4Fe-4S] cluster.

[4Fe-4S] cluster serves as cofactor.

Ferredoxins are iron-sulfur proteins that transfer electrons in a wide variety of metabolic reactions. The protein is Ferredoxin of Clostridium pasteurianum.